The following is a 658-amino-acid chain: Sulfate transporter 3.1 (658 aa).

Residues methionine 1–aspartate 85 are Cytoplasmic-facing. The chain crosses the membrane as a helical span at residues leucine 86 to leucine 106. Residues alanine 107 to asparagine 108 are Extracellular-facing. A helical transmembrane segment spans residues leucine 109–glycine 129. At serine 130–aspartate 133 the chain is on the cytoplasmic side. Residues leucine 134–valine 154 traverse the membrane as a helical segment. The Extracellular portion of the chain corresponds to aspartate 155–tyrosine 163. Residues leucine 164 to phenylalanine 184 traverse the membrane as a helical segment. Arginine 185 is a topological domain (cytoplasmic). A helical membrane pass occupies residues leucine 186 to alanine 206. The Extracellular portion of the chain corresponds to threonine 207–tryptophan 245. The helical transmembrane segment at glutamate 246–isoleucine 266 threads the bilayer. Residues lysine 267 to phenylalanine 271 lie on the Cytoplasmic side of the membrane. A helical transmembrane segment spans residues phenylalanine 272 to phenylalanine 292. Topologically, residues threonine 293–glycine 332 are extracellular. Residues leucine 333 to phenylalanine 353 form a helical membrane-spanning segment. Residues lysine 354–glutamate 363 lie on the Cytoplasmic side of the membrane. Residues methionine 364–glycine 384 traverse the membrane as a helical segment. The Extracellular portion of the chain corresponds to proline 385–lysine 398. A helical membrane pass occupies residues threonine 399 to proline 419. The Cytoplasmic portion of the chain corresponds to leucine 420 to proline 425. The chain crosses the membrane as a helical span at residues leucine 426–alanine 446. At isoleucine 447–tyrosine 464 the chain is on the extracellular side. A helical transmembrane segment spans residues valine 465–alanine 485. Over arginine 486–valine 658 the chain is Cytoplasmic. In terms of domain architecture, STAS spans glutamine 513–cysteine 637.

It belongs to the SLC26A/SulP transporter (TC 2.A.53) family. As to expression, expressed only in leaves.

Its subcellular location is the membrane. H(+)/sulfate cotransporter that may play a role in the regulation of sulfate assimilation. This is Sulfate transporter 3.1 (SULTR3;1) from Arabidopsis thaliana (Mouse-ear cress).